The primary structure comprises 202 residues: Venom allergen 5 (202 aa).

4 cysteine pairs are disulfide-bonded: C4/C16, C8/C101, C26/C94, and C168/C185. One can recognise an SCP domain in the interval 46 to 187 (KQHNEFRQKV…WHRHYLVCNY (142 aa)).

It belongs to the CRISP family. Venom allergen 5-like subfamily. Expressed by the venom gland.

It localises to the secreted. The sequence is that of Venom allergen 5 from Vespa mandarinia (Asian giant hornet).